The chain runs to 241 residues: Dolichol-phosphate mannosyltransferase subunit 1 (241 aa).

Pro13, Tyr15, Glu17, Ile44, Asp46, Asp99, Ala100, Asp101, Arg128, Arg215, and Lys221 together coordinate GDP-alpha-D-mannose. Asp101 is a Mg(2+) binding site. Asp101 provides a ligand contact to Mn(2+).

It belongs to the glycosyltransferase 2 family. It depends on Mg(2+) as a cofactor. The cofactor is Mn(2+). Ca(2+) serves as cofactor.

It is found in the endoplasmic reticulum. The enzyme catalyses a di-trans,poly-cis-dolichyl phosphate + GDP-alpha-D-mannose = a di-trans,poly-cis-dolichyl beta-D-mannosyl phosphate + GDP. The protein operates within protein modification; protein glycosylation. Its function is as follows. Transfers mannose from GDP-mannose to dolichol monophosphate to form dolichol phosphate mannose (Dol-P-Man) which is the mannosyl donor in pathways leading to N-glycosylation, glycosyl phosphatidylinositol membrane anchoring, and O-mannosylation of proteins. The sequence is that of Dolichol-phosphate mannosyltransferase subunit 1 from Drosophila melanogaster (Fruit fly).